A 497-amino-acid polypeptide reads, in one-letter code: L-amino-acid oxidase BjussuLAAO-I (497 aa).

The first 13 residues, 1-13, serve as a signal peptide directing secretion; sequence MNVFFMFSKPGKL. C23 and C186 are joined by a disulfide. FAD contacts are provided by residues 56 to 57, 76 to 77, 76 to 80, Q84, and 100 to 103; these read MS, EA, EASER, and GPMR. R103 serves as a coordination point for substrate. N185 carries an N-linked (GlcNAc...) asparagine glycan. H236 serves as a coordination point for substrate. Residue V274 coordinates FAD. The cysteines at positions 344 and 425 are disulfide-linked. Y385 serves as a coordination point for substrate. Residues E470, 477 to 482, and 478 to 482 each bind FAD; these read GWIAST and WIAST. 477–478 provides a ligand contact to substrate; it reads GW.

Belongs to the flavin monoamine oxidase family. FIG1 subfamily. As to quaternary structure, homodimer; non-covalently linked. Requires FAD as cofactor. In terms of tissue distribution, expressed by the venom gland.

Its subcellular location is the secreted. It catalyses the reaction an L-alpha-amino acid + O2 + H2O = a 2-oxocarboxylate + H2O2 + NH4(+). It carries out the reaction L-leucine + O2 + H2O = 4-methyl-2-oxopentanoate + H2O2 + NH4(+). The catalysed reaction is L-phenylalanine + O2 + H2O = 3-phenylpyruvate + H2O2 + NH4(+). The enzyme catalyses L-tryptophan + O2 + H2O = indole-3-pyruvate + H2O2 + NH4(+). It catalyses the reaction L-methionine + O2 + H2O = 4-methylsulfanyl-2-oxobutanoate + H2O2 + NH4(+). It carries out the reaction L-isoleucine + O2 + H2O = (S)-3-methyl-2-oxopentanoate + H2O2 + NH4(+). The catalysed reaction is L-tyrosine + O2 + H2O = 3-(4-hydroxyphenyl)pyruvate + H2O2 + NH4(+). The enzyme catalyses L-cysteine + O2 + H2O = 2-oxo-3-sulfanylpropanoate + H2O2 + NH4(+). Functionally, catalyzes an oxidative deamination of predominantly hydrophobic and aromatic L-amino acids, thus producing hydrogen peroxide that may contribute to the diverse toxic effects of this enzyme. Shows high specificity for L-Met, L-Leu, L-Phe, L-Tyr, L-Ile, L-Trp, a moderate activity on L-Cys and low activity on L-Val, L-Lys, L-Arg, L-His, L-Gln, L-Thr and L-Ser. Exhibits diverse biological activities, such as hemorrhage, hemolysis, edema, apoptosis of vascular endothelial cells or tumor cell lines, and antibacterial, as well as regulation of platelet aggregation. Effects of snake L-amino oxidases on platelets are controversial, since they either induce aggregation or inhibit agonist-induced aggregation. These different effects are probably due to different experimental conditions. In vitro, shows parasiticidal activities against both trypanosomes and leishmania, as a result of enzyme-catalyzed hydrogen peroxide production. The chain is L-amino-acid oxidase BjussuLAAO-I from Bothrops jararacussu (Jararacussu).